Consider the following 333-residue polypeptide: Fructose-1,6-bisphosphatase class 1 (333 aa).

Residues E92, D113, L115, and D116 each coordinate Mg(2+). Substrate-binding positions include 116–119, N209, Y242, and K272; that span reads DGSS. A Mg(2+)-binding site is contributed by E278.

The protein belongs to the FBPase class 1 family. Homotetramer. Requires Mg(2+) as cofactor.

It localises to the cytoplasm. The enzyme catalyses beta-D-fructose 1,6-bisphosphate + H2O = beta-D-fructose 6-phosphate + phosphate. It participates in carbohydrate biosynthesis; Calvin cycle. In Chlorobium chlorochromatii (strain CaD3), this protein is Fructose-1,6-bisphosphatase class 1.